The sequence spans 66 residues: Beta-defensin 134 (66 aa).

The first 19 residues, M1–A19, serve as a signal peptide directing secretion. 3 cysteine pairs are disulfide-bonded: C32/C58, C38/C52, and C42/C59.

It belongs to the beta-defensin family.

The protein resides in the secreted. Functionally, has antibacterial activity. The chain is Beta-defensin 134 (DEFB134) from Homo sapiens (Human).